Reading from the N-terminus, the 167-residue chain is UPF0598 protein CG30010 (167 aa).

The protein belongs to the UPF0598 family.

The chain is UPF0598 protein CG30010 from Drosophila melanogaster (Fruit fly).